A 1082-amino-acid polypeptide reads, in one-letter code: Error-prone DNA polymerase (1082 aa).

The protein belongs to the DNA polymerase type-C family. DnaE2 subfamily.

The protein resides in the cytoplasm. It carries out the reaction DNA(n) + a 2'-deoxyribonucleoside 5'-triphosphate = DNA(n+1) + diphosphate. In terms of biological role, DNA polymerase involved in damage-induced mutagenesis and translesion synthesis (TLS). It is not the major replicative DNA polymerase. In Xanthomonas campestris pv. campestris (strain 8004), this protein is Error-prone DNA polymerase.